The following is a 515-amino-acid chain: 1-pyrroline-5-carboxylate dehydrogenase 2 (515 aa).

Residues Glu-286 and Cys-320 contribute to the active site.

The protein belongs to the aldehyde dehydrogenase family. RocA subfamily.

It catalyses the reaction L-glutamate 5-semialdehyde + NAD(+) + H2O = L-glutamate + NADH + 2 H(+). It functions in the pathway amino-acid degradation; L-proline degradation into L-glutamate; L-glutamate from L-proline: step 2/2. Its function is as follows. Important for the use of proline as a sole carbon and energy source or a sole nitrogen source. This Bacillus subtilis (strain 168) protein is 1-pyrroline-5-carboxylate dehydrogenase 2.